The chain runs to 613 residues: Pentatricopeptide repeat-containing protein At2g02750 (613 aa).

PPR repeat units follow at residues 30–64 (NKFTFPPLLKSCAKLGDVVQGRILHAQVVKTGFFV), 65–99 (DVFTATALVSMYMKVKQVTDALKVLDEMPERGIAS), 101–126 (NAAVSGLLENGFCRDAFRMFGDARVS), 128–162 (SGMNSVTVASVLGGCGDIEGGMQLHCLAMKSGFEM), 163–193 (EVYVGTSLVSMYSRCGEWVLAARMFEKVPHK), 194–228 (SVVTYNAFISGLMENGVMNLVPSVFNLMRKFSSEE), 230–264 (NDVTFVNAITACASLLNLQYGRQLHGLVMKKEFQF), 265–295 (ETMVGTALIDMYSKCRCWKSAYIVFTELKDT), 297–331 (NLISWNSVISGMMINGQHETAVELFEKLDSEGLKP), 332–366 (DSATWNSLISGFSQLGKVIEAFKFFERMLSVVMVP), 367–401 (SLKCLTSLLSACSDIWTLKNGKEIHGHVIKAAAER), 402–432 (DIFVLTSLIDMYMKCGLSSWARRIFDRFEPK), 435–469 (DPVFWNVMISGYGKHGECESAIEIFELLREEKVEP), 470–500 (SLATFTAVLSACSHCGNVEKGSQIFRLMQEE), and 506–539 (STEHIGCMIDLLGRSGRLREAKEVIDQMSEPSSS). The segment at 540-613 (VYSSLLGSCR…VKLPGLSLSG (74 aa)) is type E motif; degenerate.

The protein belongs to the PPR family. PCMP-E subfamily.

The polypeptide is Pentatricopeptide repeat-containing protein At2g02750 (PCMP-E22) (Arabidopsis thaliana (Mouse-ear cress)).